Here is a 2346-residue protein sequence, read N- to C-terminus: Highly reducing polyketide synthase claI (2346 aa).

The 403-residue stretch at 10 to 412 (TPAIAVVGMA…GTNCHLIVED (403 aa)) folds into the Ketosynthase family 3 (KS3) domain. Catalysis depends on for beta-ketoacyl synthase activity residues cysteine 183, histidine 295, and histidine 335. Positions 530–842 (IFTGQGSQWP…EYFSALKRGE (313 aa)) are malonyl-CoA:ACP transacylase (MAT) domain. Serine 622 functions as the For malonyltransferase activity in the catalytic mechanism. Positions 912-1048 (HDLLGSKILG…GLIRTSEEDS (137 aa)) are N-terminal hotdog fold. The dehydratase (DH) domain stretch occupies residues 912 to 1213 (HDLLGSKILG…INGLRFSSVD (302 aa)). Positions 912–1218 (HDLLGSKILG…FSSVDLGSVQ (307 aa)) constitute a PKS/mFAS DH domain. Catalysis depends on histidine 944, which acts as the Proton acceptor; for dehydratase activity. The interval 1060–1218 (IHATPAQVWY…FSSVDLGSVQ (159 aa)) is C-terminal hotdog fold. Catalysis depends on aspartate 1124, which acts as the Proton donor; for dehydratase activity. Positions 1633–1946 (GSLEALQWTQ…SARHIGKILI (314 aa)) are enoyl reductase (ER) domain. Positions 1972-2151 (TYLIVGGLRG…HSLDLGVVDA (180 aa)) are ketoreductase (KR) domain. A Carrier domain is found at 2258–2336 (SQLVEKAVTL…ALAEKMVSKV (79 aa)). Serine 2296 is subject to O-(pantetheine 4'-phosphoryl)serine.

It depends on pantetheine 4'-phosphate as a cofactor.

The protein operates within secondary metabolite biosynthesis. Its function is as follows. Highly reducing polyketide synthase; part of the cla gene cluster that produces clavatol and ortho-quinone methide. The clavatol biosynthesis cluster cla and the terrestric acid cluster tra are both involved in the production of peniphenones and penilactones. The non-reducing PKS claF is responsible for the formation of clavatol from successive condensations of 3 malonyl-CoA units, presumably with a simple acetyl-CoA starter unit, and 2 methylation steps. The esterase claE probably collaborates with claF by catalyzing the hydrolysis of ACP-bound acyl intermediates to free the ACP from stalled intermediates. The clavatol oxidase claD then converts clavatol to hydroxyclavatol. Spontaneous dehydration of hydroxyclavatol leads to the accumulation of the highly active ortho-quinone methide. On the other hand, the PKS-NRPS hybrid traA is involved in the formation of crustosic acid, with the help of traB and traD. The polyketide synthase module (PKS) of traA is responsible for the synthesis of the polyketide backbone via the condensation of an acetyl-CoA starter unit with 3 malonyl-CoA units. The downstream nonribosomal peptide synthetase (NRPS) module then amidates the carboxyl end of the polyketide with L-malic acid. Because traA lacks a designated enoylreductase (ER) domain, the required activity is provided the enoyl reductase traG. Crustosic acid undergoes decarboxylation and isomerization to the terrestric acid, catalyzed by the 2-oxoglutarate-dependent dioxygenase traH. Both acids are further converted to the 2 gamma-butyrolactones (R)-5-methyltetronic acid and (S)-5-carboxylmethyltetronic acid, with involvement of the cytochrome P450 monooxygenase claJ. Spontaneous addition of the methide to these gamma-butyrolactones leads to peniphenone D and penilactone D, which undergo again stereospecific attacking by methide to give penilactones A and B. The function of the highly reducing polyketide synthase claI has not been investigated yet. The polypeptide is Highly reducing polyketide synthase claI (Penicillium crustosum (Blue mold fungus)).